The following is a 239-amino-acid chain: UPF0126 membrane protein VC_2382 (239 aa).

A run of 6 helical transmembrane segments spans residues L38–A58, K62–I82, A86–I106, A122–V142, L153–L173, and V185–Y205.

It belongs to the UPF0126 family.

It is found in the cell membrane. This chain is UPF0126 membrane protein VC_2382, found in Vibrio cholerae serotype O1 (strain ATCC 39315 / El Tor Inaba N16961).